A 472-amino-acid polypeptide reads, in one-letter code: F420-non-reducing hydrogenase subunit A (472 aa).

Positions 61, 64, 442, and 445 each coordinate Ni(2+).

This sequence belongs to the [NiFe]/[NiFeSe] hydrogenase large subunit family. In terms of assembly, the F420-non-reducing hydrogenase is composed of three subunits; MvhA, MvhD and MvhG. It forms a complex with the heterodisulfide reductase (hdr). Ni(2+) serves as cofactor.

Functionally, part of a complex that provides reducing equivalents for heterodisulfide reductase. This is F420-non-reducing hydrogenase subunit A (mvhA) from Methanothermobacter thermautotrophicus (strain ATCC 29096 / DSM 1053 / JCM 10044 / NBRC 100330 / Delta H) (Methanobacterium thermoautotrophicum).